The primary structure comprises 359 residues: Putative mannose-1-phosphate guanyltransferase (359 aa).

This sequence belongs to the transferase hexapeptide repeat family.

The catalysed reaction is alpha-D-mannose 1-phosphate + GTP + H(+) = GDP-alpha-D-mannose + diphosphate. The protein is Putative mannose-1-phosphate guanyltransferase (mpg1) of Sulfolobus acidocaldarius (strain ATCC 33909 / DSM 639 / JCM 8929 / NBRC 15157 / NCIMB 11770).